The primary structure comprises 153 residues: Ribonuclease H (153 aa).

Residues 7–148 (PADLVEMWTD…ADMLANQGVA (142 aa)) enclose the RNase H type-1 domain. 4 residues coordinate Mg(2+): D16, E54, D76, and D140.

It belongs to the RNase H family. In terms of assembly, monomer. Requires Mg(2+) as cofactor.

Its subcellular location is the cytoplasm. The catalysed reaction is Endonucleolytic cleavage to 5'-phosphomonoester.. Endonuclease that specifically degrades the RNA of RNA-DNA hybrids. The sequence is that of Ribonuclease H from Bordetella avium (strain 197N).